The primary structure comprises 444 residues: 23S rRNA (uracil(1939)-C(5))-methyltransferase RlmD (444 aa).

The TRAM domain maps to 5–67 (RNRFDRTPFQ…RHFDEAKTVE (63 aa)). [4Fe-4S] cluster contacts are provided by Cys-80, Cys-86, Cys-89, and Cys-168. The S-adenosyl-L-methionine site is built by Gln-276, Phe-305, Asn-310, Glu-326, Asp-353, and Asp-374. Cys-400 functions as the Nucleophile in the catalytic mechanism.

Belongs to the class I-like SAM-binding methyltransferase superfamily. RNA M5U methyltransferase family. RlmD subfamily.

The catalysed reaction is uridine(1939) in 23S rRNA + S-adenosyl-L-methionine = 5-methyluridine(1939) in 23S rRNA + S-adenosyl-L-homocysteine + H(+). Its function is as follows. Catalyzes the formation of 5-methyl-uridine at position 1939 (m5U1939) in 23S rRNA. This Xanthomonas oryzae pv. oryzae (strain MAFF 311018) protein is 23S rRNA (uracil(1939)-C(5))-methyltransferase RlmD.